Reading from the N-terminus, the 298-residue chain is MARTDHDRWDLATSVGATATMVAAQRALSSDANLIDDPYAAPLVRAVGIDVYVRLVDGEIQPGTSEFDPHRMAKGMACRTRFYDDFFLDAARAGVGQAVILASGLDARAYRLPWPAGTVVYEVDMPDVIEFKTLTLADLGAQPTAQRRTVAIDLRDDWAAALREEGFDTQAPAAWSAEGLLVYLPEQAQDALFDNITALSAPGSRLAFDFVPDTAVFADPRWRAHHERMSELGFEVDFNDLVYHGERSHIVDHLSGRGWRVTSRTIAELHAANGFAYAADDVAAAFADVTYSSAVLGG.

S-adenosyl-L-methionine contacts are provided by residues D124 and 153 to 154 (DL).

It belongs to the UPF0677 family.

Functionally, exhibits S-adenosyl-L-methionine-dependent methyltransferase activity. The protein is Putative S-adenosyl-L-methionine-dependent methyltransferase MAV_0778 of Mycobacterium avium (strain 104).